The sequence spans 294 residues: Tryptophan 2,3-dioxygenase 1 (294 aa).

Positions 1 to 20 (MSEPIQPTRPAASGCPMHGA) are disordered. Substrate-binding positions include 63 to 67 (FIVQH), Tyr125, and Arg129. A heme-binding site is contributed by His252. Residue Thr266 coordinates substrate.

It belongs to the tryptophan 2,3-dioxygenase family. In terms of assembly, homotetramer. Heme serves as cofactor.

The enzyme catalyses L-tryptophan + O2 = N-formyl-L-kynurenine. Its pathway is amino-acid degradation; L-tryptophan degradation via kynurenine pathway; L-kynurenine from L-tryptophan: step 1/2. Functionally, heme-dependent dioxygenase that catalyzes the oxidative cleavage of the L-tryptophan (L-Trp) pyrrole ring and converts L-tryptophan to N-formyl-L-kynurenine. Catalyzes the oxidative cleavage of the indole moiety. The chain is Tryptophan 2,3-dioxygenase 1 from Ralstonia nicotianae (strain ATCC BAA-1114 / GMI1000) (Ralstonia solanacearum).